The sequence spans 307 residues: NAD kinase 1 (307 aa).

D67 functions as the Proton acceptor in the catalytic mechanism. NAD(+)-binding positions include 67–68 (DG), 149–150 (ND), R179, and D181.

This sequence belongs to the NAD kinase family. A divalent metal cation serves as cofactor.

Its subcellular location is the cytoplasm. The enzyme catalyses NAD(+) + ATP = ADP + NADP(+) + H(+). Its function is as follows. Involved in the regulation of the intracellular balance of NAD and NADP, and is a key enzyme in the biosynthesis of NADP. Catalyzes specifically the phosphorylation on 2'-hydroxyl of the adenosine moiety of NAD to yield NADP. The protein is NAD kinase 1 of Prochlorococcus marinus (strain SARG / CCMP1375 / SS120).